Consider the following 334-residue polypeptide: Adenosine deaminase (334 aa).

2 residues coordinate Zn(2+): H16 and H18. 3 residues coordinate substrate: H18, D20, and G173. Zn(2+) is bound at residue H200. E203 functions as the Proton donor in the catalytic mechanism. D281 contacts Zn(2+).

This sequence belongs to the metallo-dependent hydrolases superfamily. Adenosine and AMP deaminases family. Adenosine deaminase subfamily. Zn(2+) is required as a cofactor.

The enzyme catalyses adenosine + H2O + H(+) = inosine + NH4(+). It catalyses the reaction 2'-deoxyadenosine + H2O + H(+) = 2'-deoxyinosine + NH4(+). Its function is as follows. Catalyzes the hydrolytic deamination of adenosine and 2-deoxyadenosine. The sequence is that of Adenosine deaminase from Clostridium acetobutylicum (strain ATCC 824 / DSM 792 / JCM 1419 / IAM 19013 / LMG 5710 / NBRC 13948 / NRRL B-527 / VKM B-1787 / 2291 / W).